Consider the following 192-residue polypeptide: Adenylate kinase (192 aa).

10 to 18 (GVPGVGGTT) contacts ATP.

Belongs to the archaeal adenylate kinase family. As to quaternary structure, monomer.

Its subcellular location is the cytoplasm. The catalysed reaction is AMP + ATP = 2 ADP. This Methanococcus maripaludis (strain C5 / ATCC BAA-1333) protein is Adenylate kinase.